The following is a 1169-amino-acid chain: Chromosome partition protein Smc (1169 aa).

ATP is bound at residue 32-39; that stretch reads PNGSGKSN. Residues 166–507 adopt a coiled-coil conformation; the sequence is DEISGIAEFD…RIKALKEMEE (342 aa). One can recognise an SMC hinge domain in the interval 523-636; the sequence is PGIIDIVGNL…ENIDIAKELA (114 aa). The stretch at 676–1030 forms a coiled coil; that stretch reads SKLNKIADEI…NKKKEVFMEV (355 aa).

The protein belongs to the SMC family. Homodimer.

The protein resides in the cytoplasm. Required for chromosome condensation and partitioning. This chain is Chromosome partition protein Smc, found in Methanocaldococcus jannaschii (strain ATCC 43067 / DSM 2661 / JAL-1 / JCM 10045 / NBRC 100440) (Methanococcus jannaschii).